We begin with the raw amino-acid sequence, 125 residues long: Secretion system apparatus protein SsaO (125 aa).

The polypeptide is Secretion system apparatus protein SsaO (ssaO) (Salmonella typhimurium (strain LT2 / SGSC1412 / ATCC 700720)).